Reading from the N-terminus, the 309-residue chain is L-lactate dehydrogenase 2 (309 aa).

Residues V16, D37, Y67, and 81-82 (GV) contribute to the NAD(+) site. R90 contributes to the substrate binding site. S103 is a binding site for NAD(+). Substrate is bound at residue 122 to 125 (NPVD). T145 is a binding site for NAD(+). A substrate-binding site is contributed by 150–153 (DTAR). H177 serves as the catalytic Proton acceptor. T227 is a substrate binding site.

Belongs to the LDH/MDH superfamily. LDH family. Homotetramer.

The protein resides in the cytoplasm. The catalysed reaction is (S)-lactate + NAD(+) = pyruvate + NADH + H(+). Its pathway is fermentation; pyruvate fermentation to lactate; (S)-lactate from pyruvate: step 1/1. Functionally, catalyzes the conversion of lactate to pyruvate. This is L-lactate dehydrogenase 2 from Lactiplantibacillus plantarum (strain ATCC BAA-793 / NCIMB 8826 / WCFS1) (Lactobacillus plantarum).